The chain runs to 172 residues: Large ribosomal subunit protein uL10 (172 aa).

This sequence belongs to the universal ribosomal protein uL10 family. Part of the ribosomal stalk of the 50S ribosomal subunit. The N-terminus interacts with L11 and the large rRNA to form the base of the stalk. The C-terminus forms an elongated spine to which L12 dimers bind in a sequential fashion forming a multimeric L10(L12)X complex.

Functionally, forms part of the ribosomal stalk, playing a central role in the interaction of the ribosome with GTP-bound translation factors. The sequence is that of Large ribosomal subunit protein uL10 from Pelodictyon phaeoclathratiforme (strain DSM 5477 / BU-1).